We begin with the raw amino-acid sequence, 55 residues long: ATP synthase F(0) complex subunit 8 (55 aa).

A helical transmembrane segment spans residues 4 to 24; that stretch reads LNPSPWFIILLFSWVIFMVIL.

The protein belongs to the ATPase protein 8 family. As to quaternary structure, component of the ATP synthase complex composed at least of ATP5F1A/subunit alpha, ATP5F1B/subunit beta, ATP5MC1/subunit c (homooctomer), MT-ATP6/subunit a, MT-ATP8/subunit 8, ATP5ME/subunit e, ATP5MF/subunit f, ATP5MG/subunit g, ATP5MK/subunit k, ATP5MJ/subunit j, ATP5F1C/subunit gamma, ATP5F1D/subunit delta, ATP5F1E/subunit epsilon, ATP5PF/subunit F6, ATP5PB/subunit b, ATP5PD/subunit d, ATP5PO/subunit OSCP. ATP synthase complex consists of a soluble F(1) head domain (subunits alpha(3) and beta(3)) - the catalytic core - and a membrane F(0) domain - the membrane proton channel (subunits c, a, 8, e, f, g, k and j). These two domains are linked by a central stalk (subunits gamma, delta, and epsilon) rotating inside the F1 region and a stationary peripheral stalk (subunits F6, b, d, and OSCP).

The protein resides in the mitochondrion membrane. Subunit 8, of the mitochondrial membrane ATP synthase complex (F(1)F(0) ATP synthase or Complex V) that produces ATP from ADP in the presence of a proton gradient across the membrane which is generated by electron transport complexes of the respiratory chain. ATP synthase complex consist of a soluble F(1) head domain - the catalytic core - and a membrane F(1) domain - the membrane proton channel. These two domains are linked by a central stalk rotating inside the F(1) region and a stationary peripheral stalk. During catalysis, ATP synthesis in the catalytic domain of F(1) is coupled via a rotary mechanism of the central stalk subunits to proton translocation. In vivo, can only synthesize ATP although its ATP hydrolase activity can be activated artificially in vitro. Part of the complex F(0) domain. The polypeptide is ATP synthase F(0) complex subunit 8 (Scyliorhinus canicula (Small-spotted catshark)).